Here is a 596-residue protein sequence, read N- to C-terminus: Aspartic proteinase MKC7 (596 aa).

The signal sequence occupies residues 1 to 22; it reads MKLSVLTFVVDALLVCSSIVDA. Positions 23–65 are excised as a propeptide; that stretch reads GVTDFPSLPSNEVYVKMNFQKKYGSSFENALDDTKGRTRLMTR. The region spanning 81-468 is the Peptidase A1 domain; it reads YSVELDIGTP…DLDNMEISMA (388 aa). The active site involves aspartate 99. Asparagine 180, asparagine 190, asparagine 219, asparagine 229, asparagine 232, asparagine 286, and asparagine 346 each carry an N-linked (GlcNAc...) asparagine glycan. Aspartate 360 is an active-site residue. 2 N-linked (GlcNAc...) asparagine glycosylation sites follow: asparagine 471 and asparagine 517. Residues 530-570 show a composition bias toward low complexity; the sequence is ATSSSSSKGQKTQTSTTALSISKSTSSTSSTGMLSPTSSSS. Positions 530–578 are disordered; that stretch reads ATSSSSSKGQKTQTSTTALSISKSTSSTSSTGMLSPTSSSSTRKENGGH. Asparagine 575 is lipidated: GPI-anchor amidated asparagine. Positions 576 to 596 are cleaved as a propeptide — removed in mature form; it reads GGHNLNPPFFARFITAIFHHI.

Belongs to the peptidase A1 family.

The protein resides in the cell membrane. The catalysed reaction is Hydrolyzes various precursor proteins with Arg or Lys in P1, and commonly Arg or Lys also in P2. The P3 amino acid is usually non-polar, but otherwise additional basic amino acids are favorable in both non-prime and prime positions.. In terms of biological role, cleaves proteins C-terminally to the most C-terminal basic residue. Can process the alpha-mating factor precursor. Required for cell wall integrity. In Saccharomyces cerevisiae (strain ATCC 204508 / S288c) (Baker's yeast), this protein is Aspartic proteinase MKC7 (MKC7).